The primary structure comprises 345 residues: MKIGIVGATGYGGTELVRILSHHPHAEECILYSSSGEGNVYSEGYPHLTGLADQQLKPIDMNTIKHEIDIMFLAAPPGVSSELTPKLADAGITVIDLSGDLRIKEPAEYEKWYKRTAAPKAVIQEAVYGLAELNQLQIQQAKLIANPGCFPTAVLLGLAPLAQKKLLDESFVIVDAKTGVSGAGRKASMGTHFSELNDNFKIYKVNEHQHTPEIEQALNEWQPGLGPITFSAHLVPMTRGIMATMYTRLTCDLTADDLHDLYSEFYQDSYFVRVRPKGQYPQTKEVYGSNFCDIAVTLDERTNRVTIVSVIDNLMKGAAGQAVQNFNLMNGWNEETGLTITPIYP.

Cys-149 is a catalytic residue.

It belongs to the NAGSA dehydrogenase family. Type 1 subfamily.

It is found in the cytoplasm. The enzyme catalyses N-acetyl-L-glutamate 5-semialdehyde + phosphate + NADP(+) = N-acetyl-L-glutamyl 5-phosphate + NADPH + H(+). The protein operates within amino-acid biosynthesis; L-arginine biosynthesis; N(2)-acetyl-L-ornithine from L-glutamate: step 3/4. Functionally, catalyzes the NADPH-dependent reduction of N-acetyl-5-glutamyl phosphate to yield N-acetyl-L-glutamate 5-semialdehyde. The sequence is that of N-acetyl-gamma-glutamyl-phosphate reductase from Bacillus subtilis (strain 168).